The primary structure comprises 111 residues: uncharacterized protein (111 aa).

Positions 4-51 (LGQVKVLEEKVAKAVHLVQMLKEENAALRAEIDGRGKRITELEQLVLX) form a coiled coil.

This is an uncharacterized protein from Treponema pallidum (strain Nichols).